Here is a 468-residue protein sequence, read N- to C-terminus: Mannan endo-1,4-beta-mannosidase 3 (468 aa).

Residues methionine 1–alanine 23 form the signal peptide. Position 86 (tryptophan 86) interacts with substrate. A glycan (N-linked (GlcNAc...) asparagine) is linked at asparagine 152. Asparagine 201 contacts substrate. Residue glutamate 202 is the Proton donor of the active site. Tyrosine 281 provides a ligand contact to substrate. The N-linked (GlcNAc...) asparagine glycan is linked to asparagine 300. The Nucleophile role is filled by glutamate 321. N-linked (GlcNAc...) asparagine glycosylation occurs at asparagine 333. Residues tryptophan 364 and aspartate 371 each coordinate substrate. The disordered stretch occupies residues leucine 415–aspartate 436. Residues arginine 416–arginine 430 show a composition bias toward basic residues.

It belongs to the glycosyl hydrolase 5 (cellulase A) family. Expressed in seeds.

The protein resides in the secreted. It carries out the reaction Random hydrolysis of (1-&gt;4)-beta-D-mannosidic linkages in mannans, galactomannans and glucomannans.. The sequence is that of Mannan endo-1,4-beta-mannosidase 3 (MAN3) from Oryza sativa subsp. japonica (Rice).